The chain runs to 79 residues: UPF0349 protein GTNG_2908 (79 aa).

This sequence belongs to the UPF0349 family.

This is UPF0349 protein GTNG_2908 from Geobacillus thermodenitrificans (strain NG80-2).